Reading from the N-terminus, the 88-residue chain is ATP synthase epsilon chain (88 aa).

It belongs to the ATPase epsilon chain family. F-type ATPases have 2 components, CF(1) - the catalytic core - and CF(0) - the membrane proton channel. CF(1) has five subunits: alpha(3), beta(3), gamma(1), delta(1), epsilon(1). CF(0) has three main subunits: a, b and c.

The protein resides in the cell inner membrane. Produces ATP from ADP in the presence of a proton gradient across the membrane. The sequence is that of ATP synthase epsilon chain (atpC) from Chlorobaculum tepidum (strain ATCC 49652 / DSM 12025 / NBRC 103806 / TLS) (Chlorobium tepidum).